We begin with the raw amino-acid sequence, 529 residues long: UDP-glycosyltransferase (529 aa).

N-linked (GlcNAc...) asparagine glycans are attached at residues Asn70 and Asn420. The chain crosses the membrane as a helical span at residues 504–524 (LDLYLVYIALFAVPVGAVRWI).

Belongs to the glycosyltransferase 28 family.

The protein resides in the membrane. The catalysed reaction is stromemycin aglycone + UDP-alpha-D-glucose = stromemycin + UDP + H(+). It participates in mycotoxin biosynthesis. UDP-glycosyltransferase; part of the gene cluster that mediates the biosynthesis of stromemycin, a depside C-glucoside with two unsaturated C9 side chains belonging to aromatic polyketide glycosides. Acts as the tailoring enzyme responsible for 3-C-glucosylation of bininalkenylresorcylic acid to yield stromemycin. The chain is UDP-glycosyltransferase from Talaromyces amestolkiae.